A 122-amino-acid polypeptide reads, in one-letter code: Iron-sulfur cluster assembly protein SufA (122 aa).

The [2Fe-2S] cluster site is built by Cys-50, Cys-114, and Cys-116. The [4Fe-4S] cluster site is built by Cys-50, Cys-114, and Cys-116.

This sequence belongs to the HesB/IscA family. Homodimer. Interacts with SufB and SufC.

Member of gene cluster sufABCDSE that mediates iron-sulfur cluster assembly under oxidative stress and iron limitation conditions. Binds [2Fe-2S] and [4Fe-4S] clusters by mobilizing sulfur atoms provided by the SufS-SufE cysteine desulfurase system and then transfers the assembled Fe-S clusters to target proteins including ferredoxin and aconitase. Seems to act as a Fe-S cluster carrier rather than a scaffold, this role being performed by SufB and SufC. The polypeptide is Iron-sulfur cluster assembly protein SufA (sufA) (Escherichia coli (strain K12)).